The following is a 225-amino-acid chain: Peptidyl-tRNA hydrolase (225 aa).

Y27 contacts tRNA. Catalysis depends on H32, which acts as the Proton acceptor. The tRNA site is built by Y78, N80, and N126. The disordered stretch occupies residues 198 to 225 (FNPLDFSGPDRQDQPAPLNPAKTAPGES).

It belongs to the PTH family. Monomer.

It is found in the cytoplasm. The enzyme catalyses an N-acyl-L-alpha-aminoacyl-tRNA + H2O = an N-acyl-L-amino acid + a tRNA + H(+). Its function is as follows. Hydrolyzes ribosome-free peptidyl-tRNAs (with 1 or more amino acids incorporated), which drop off the ribosome during protein synthesis, or as a result of ribosome stalling. Catalyzes the release of premature peptidyl moieties from peptidyl-tRNA molecules trapped in stalled 50S ribosomal subunits, and thus maintains levels of free tRNAs and 50S ribosomes. The sequence is that of Peptidyl-tRNA hydrolase from Synechococcus sp. (strain JA-3-3Ab) (Cyanobacteria bacterium Yellowstone A-Prime).